The primary structure comprises 371 residues: Glutamate 5-kinase (371 aa).

Lys-11 contributes to the ATP binding site. Substrate contacts are provided by Ser-52, Asp-139, and Asn-151. Residues 171–172 (TD) and 213–219 (TGGMATK) each bind ATP. The 79-residue stretch at 278-356 (EGSLTLDEGA…AEIPYILGYE (79 aa)) folds into the PUA domain.

It belongs to the glutamate 5-kinase family.

Its subcellular location is the cytoplasm. It carries out the reaction L-glutamate + ATP = L-glutamyl 5-phosphate + ADP. Its pathway is amino-acid biosynthesis; L-proline biosynthesis; L-glutamate 5-semialdehyde from L-glutamate: step 1/2. Catalyzes the transfer of a phosphate group to glutamate to form L-glutamate 5-phosphate. This Synechococcus sp. (strain JA-3-3Ab) (Cyanobacteria bacterium Yellowstone A-Prime) protein is Glutamate 5-kinase.